Here is a 288-residue protein sequence, read N- to C-terminus: Homoserine kinase (288 aa).

Position 79-89 (79-89 (PPARGLGSSSA)) interacts with ATP.

It belongs to the GHMP kinase family. Homoserine kinase subfamily.

Its subcellular location is the cytoplasm. The enzyme catalyses L-homoserine + ATP = O-phospho-L-homoserine + ADP + H(+). Its pathway is amino-acid biosynthesis; L-threonine biosynthesis; L-threonine from L-aspartate: step 4/5. Its function is as follows. Catalyzes the ATP-dependent phosphorylation of L-homoserine to L-homoserine phosphate. This Listeria monocytogenes serotype 4b (strain F2365) protein is Homoserine kinase.